We begin with the raw amino-acid sequence, 184 residues long: C-phycoerythrin beta chain (184 aa).

(2R,3E)-phycoerythrobilin contacts are provided by cysteine 48 and cysteine 59. The residue at position 70 (asparagine 70) is an N4-methylasparagine. Cysteine 80 and cysteine 165 together coordinate (2R,3E)-phycoerythrobilin.

The protein belongs to the phycobiliprotein family. In terms of assembly, heterodimer of an alpha and a beta chain. Post-translationally, contains three covalently linked bilin chromophores.

The protein localises to the cellular thylakoid membrane. Light-harvesting photosynthetic bile pigment-protein from the phycobiliprotein complex. This is C-phycoerythrin beta chain (cpeB) from Microchaete diplosiphon (Fremyella diplosiphon).